A 562-amino-acid chain; its full sequence is BOS complex subunit NCLN (562 aa).

Positions 1–41 are cleaved as a signal peptide; sequence MLEEAGEVLESVLKASCLPLSFLLFVPAVLLLLGPPPAAEA. Topologically, residues 42 to 521 are extracellular; the sequence is AHESTVYRMQ…VMNAYRVKPA (480 aa). Asparagine 240 carries N-linked (GlcNAc...) asparagine glycosylation. The interval 420–447 is disordered; it reads GFDEGHLQPNREGSTCRSADLHGSDADP. A helical transmembrane segment spans residues 522 to 542; sequence IFDLLLAVCIAAYLGVAYVAV. Over 543–562 the chain is Cytoplasmic; the sequence is QNFGLLYRMIQRLSLKTKQQ.

Belongs to the nicastrin family. As to quaternary structure, component of the multi-pass translocon (MPT) complex.

Its subcellular location is the endoplasmic reticulum membrane. Its function is as follows. Component of the multi-pass translocon (MPT) complex that mediates insertion of multi-pass membrane proteins into the lipid bilayer of membranes. The MPT complex takes over after the SEC61 complex: following membrane insertion of the first few transmembrane segments of proteins by the SEC61 complex, the MPT complex occludes the lateral gate of the SEC61 complex to promote insertion of subsequent transmembrane regions. May antagonize Nodal signaling and subsequent organization of axial structures during mesodermal patterning, via its interaction with NOMO. The chain is BOS complex subunit NCLN (NCLN) from Gallus gallus (Chicken).